Reading from the N-terminus, the 331-residue chain is UBX domain-containing protein 2B (331 aa).

2 disordered regions span residues 1-26 and 40-65; these read MAEG…SARD and KCKS…QRFY. At Ala-2 the chain carries N-acetylalanine. Phosphoserine is present on Ser-56. Position 59 is a phosphothreonine (Thr-59). Ser-66 is modified (phosphoserine). Residues 141-206 form the SEP domain; that stretch reads DVQILLKLWS…MEDHQDQEYI (66 aa). Phosphoserine is present on residues Ser-231, Ser-234, and Ser-235. The UBX domain occupies 252–329; sequence DSVPTTKIQI…DILNTVLLQQ (78 aa).

Belongs to the NSFL1C family. In terms of assembly, interacts with VCP. Does not bind ubiquitin.

The protein localises to the nucleus. It localises to the cytoplasm. Its subcellular location is the cytosol. It is found in the endoplasmic reticulum. The protein resides in the golgi apparatus. The protein localises to the cytoskeleton. It localises to the microtubule organizing center. Its subcellular location is the centrosome. Its function is as follows. Adapter protein required for Golgi and endoplasmic reticulum biogenesis. Involved in Golgi and endoplasmic reticulum maintenance during interphase and in their reassembly at the end of mitosis. The complex formed with VCP has membrane fusion activity; membrane fusion activity requires USO1-GOLGA2 tethering and BET1L. VCPIP1 is also required, but not its deubiquitinating activity. Together with NSFL1C/p47, regulates the centrosomal levels of kinase AURKA/Aurora A during mitotic progression by promoting AURKA removal from centrosomes in prophase. Also, regulates spindle orientation during mitosis. The chain is UBX domain-containing protein 2B (UBXN2B) from Homo sapiens (Human).